A 64-amino-acid polypeptide reads, in one-letter code: Large ribosomal subunit protein bL35 (64 aa).

Positions Met-1–Thr-41 are disordered.

It belongs to the bacterial ribosomal protein bL35 family.

This chain is Large ribosomal subunit protein bL35, found in Nocardia farcinica (strain IFM 10152).